We begin with the raw amino-acid sequence, 334 residues long: Protein-methionine-sulfoxide reductase catalytic subunit MsrP (334 aa).

Positions 1–44 form a signal peptide, tat-type signal; sequence MKKNQFLKESDVTAESVFFMKRRQVLKALGISAAALSLPHAAHA. Mo-molybdopterin contacts are provided by residues Asn88, 91-92, Cys146, Thr181, Asn233, Arg238, and 249-251; these read YE and GIK.

It belongs to the MsrP family. Heterodimer of a catalytic subunit (MsrP) and a heme-binding subunit (MsrQ). Mo-molybdopterin is required as a cofactor. Post-translationally, predicted to be exported by the Tat system. The position of the signal peptide cleavage has not been experimentally proven.

Its subcellular location is the periplasm. It catalyses the reaction L-methionyl-[protein] + a quinone + H2O = L-methionyl-(S)-S-oxide-[protein] + a quinol. The catalysed reaction is L-methionyl-[protein] + a quinone + H2O = L-methionyl-(R)-S-oxide-[protein] + a quinol. Part of the MsrPQ system that repairs oxidized periplasmic proteins containing methionine sulfoxide residues (Met-O), using respiratory chain electrons. Thus protects these proteins from oxidative-stress damage caused by reactive species of oxygen and chlorine generated by the host defense mechanisms. MsrPQ is essential for the maintenance of envelope integrity under bleach stress, rescuing a wide series of structurally unrelated periplasmic proteins from methionine oxidation, including the primary periplasmic chaperone SurA and the lipoprotein Pal. The catalytic subunit MsrP is non-stereospecific, being able to reduce both (R-) and (S-) diastereoisomers of methionine sulfoxide. The sequence is that of Protein-methionine-sulfoxide reductase catalytic subunit MsrP from Shigella boydii serotype 18 (strain CDC 3083-94 / BS512).